The sequence spans 145 residues: Deoxyuridine 5'-triphosphate nucleotidohydrolase (145 aa).

Substrate contacts are provided by residues 63 to 65, Q76, and 80 to 82; these read RSG and TVD.

It belongs to the dUTPase family. It depends on Mg(2+) as a cofactor.

The catalysed reaction is dUTP + H2O = dUMP + diphosphate + H(+). The protein operates within pyrimidine metabolism; dUMP biosynthesis; dUMP from dCTP (dUTP route): step 2/2. Functionally, this enzyme is involved in nucleotide metabolism: it produces dUMP, the immediate precursor of thymidine nucleotides and it decreases the intracellular concentration of dUTP so that uracil cannot be incorporated into DNA. This Chlamydia muridarum (strain MoPn / Nigg) protein is Deoxyuridine 5'-triphosphate nucleotidohydrolase.